Consider the following 391-residue polypeptide: Isocitrate dehydrogenase [NADP] (391 aa).

Positions 102, 104, 108, 118, and 142 each coordinate D-threo-isocitrate. Position 283 (Asp283) interacts with Mg(2+).

This sequence belongs to the isocitrate and isopropylmalate dehydrogenases family. Homodimer. It depends on Mg(2+) as a cofactor. The cofactor is Mn(2+).

It catalyses the reaction D-threo-isocitrate + NADP(+) = 2-oxoglutarate + CO2 + NADPH. In terms of biological role, catalyzes the oxidative decarboxylation of isocitrate to 2-oxoglutarate and carbon dioxide with the concomitant reduction of NADP(+). This chain is Isocitrate dehydrogenase [NADP] (icd), found in Streptococcus salivarius.